Reading from the N-terminus, the 325-residue chain is GMP reductase (325 aa).

Catalysis depends on C174, which acts as the Thioimidate intermediate. Residue I203–V226 participates in NADP(+) binding.

This sequence belongs to the IMPDH/GMPR family. GuaC type 2 subfamily.

The enzyme catalyses IMP + NH4(+) + NADP(+) = GMP + NADPH + 2 H(+). Functionally, catalyzes the irreversible NADPH-dependent deamination of GMP to IMP. It functions in the conversion of nucleobase, nucleoside and nucleotide derivatives of G to A nucleotides, and in maintaining the intracellular balance of A and G nucleotides. This is GMP reductase from Helicobacter pylori (strain G27).